Here is a 195-residue protein sequence, read N- to C-terminus: Cysteine/O-acetylserine efflux protein (195 aa).

The Periplasmic portion of the chain corresponds to 1 to 9; that stretch reads MTPMLLSAF. The chain crosses the membrane as a helical span at residues 10 to 32; it reads WTYTLITALTPGPNNILALSAAT. The Cytoplasmic segment spans residues 33 to 46; it reads AHGFRQSIRVLAGM. Residues 47–67 traverse the membrane as a helical segment; the sequence is SLGFLVVMLLCAGIAFSLAVI. Residues 68–69 are Periplasmic-facing; the sequence is DP. Residues 70–90 form a helical membrane-spanning segment; that stretch reads AIIHLLSWVGAAYILWLAWKI. The Cytoplasmic portion of the chain corresponds to 91 to 104; that stretch reads ATSPAADEKVRPKP. The helical transmembrane segment at 105–125 threads the bilayer; the sequence is VGFWVSFGLQFVNVKIILYGI. At 126-141 the chain is on the periplasmic side; sequence TALSTFVLPQTQALNW. The helical transmembrane segment at 142–162 threads the bilayer; the sequence is VIGVSILLALIGTFGNVCWAL. At 163–176 the chain is on the cytoplasmic side; it reads AGHLFQRAFRHYGR. The chain crosses the membrane as a helical span at residues 177–194; sequence QLNIILALLLVYCAVRIF. A topological domain (periplasmic) is located at residue tyrosine 195.

The protein belongs to the Rht family.

Its subcellular location is the cell inner membrane. It carries out the reaction O-acetyl-L-serine(in) = O-acetyl-L-serine(out). It catalyses the reaction L-cysteine(in) = L-cysteine(out). Its function is as follows. Exporter of O-acetylserine (OAS) and cysteine. This is Cysteine/O-acetylserine efflux protein (eamB) from Salmonella paratyphi A (strain ATCC 9150 / SARB42).